A 411-amino-acid polypeptide reads, in one-letter code: Citrate synthase (411 aa).

Active-site residues include His304 and Asp363.

Belongs to the citrate synthase family.

The catalysed reaction is oxaloacetate + acetyl-CoA + H2O = citrate + CoA + H(+). The protein operates within carbohydrate metabolism; tricarboxylic acid cycle; isocitrate from oxaloacetate: step 1/2. The chain is Citrate synthase (gltA) from Rickettsia akari.